Consider the following 196-residue polypeptide: Large ribosomal subunit protein uL5 (196 aa).

This sequence belongs to the universal ribosomal protein uL5 family. As to quaternary structure, part of the 50S ribosomal subunit; part of the 5S rRNA/L5/L18/L25 subcomplex. Contacts the 5S rRNA and the P site tRNA. Forms a bridge to the 30S subunit in the 70S ribosome.

Functionally, this is one of the proteins that bind and probably mediate the attachment of the 5S RNA into the large ribosomal subunit, where it forms part of the central protuberance. In the 70S ribosome it contacts protein S13 of the 30S subunit (bridge B1b), connecting the 2 subunits; this bridge is implicated in subunit movement. Contacts the P site tRNA; the 5S rRNA and some of its associated proteins might help stabilize positioning of ribosome-bound tRNAs. The protein is Large ribosomal subunit protein uL5 of Acidothermus cellulolyticus (strain ATCC 43068 / DSM 8971 / 11B).